The sequence spans 273 residues: Putative pyruvate, phosphate dikinase regulatory protein (273 aa).

151–158 (GVSRTSKT) provides a ligand contact to ADP.

This sequence belongs to the pyruvate, phosphate/water dikinase regulatory protein family. PDRP subfamily.

It carries out the reaction N(tele)-phospho-L-histidyl/L-threonyl-[pyruvate, phosphate dikinase] + ADP = N(tele)-phospho-L-histidyl/O-phospho-L-threonyl-[pyruvate, phosphate dikinase] + AMP + H(+). The catalysed reaction is N(tele)-phospho-L-histidyl/O-phospho-L-threonyl-[pyruvate, phosphate dikinase] + phosphate + H(+) = N(tele)-phospho-L-histidyl/L-threonyl-[pyruvate, phosphate dikinase] + diphosphate. Its function is as follows. Bifunctional serine/threonine kinase and phosphorylase involved in the regulation of the pyruvate, phosphate dikinase (PPDK) by catalyzing its phosphorylation/dephosphorylation. This Desulfitobacterium hafniense (strain DSM 10664 / DCB-2) protein is Putative pyruvate, phosphate dikinase regulatory protein.